The sequence spans 37 residues: Cellular retinoic acid-binding protein 2 (37 aa).

The Nuclear localization signal motif lies at lysine 21 to lysine 31.

The protein belongs to the calycin superfamily. Fatty-acid binding protein (FABP) family. Embryo.

The protein resides in the cytoplasm. It is found in the endoplasmic reticulum. It localises to the nucleus. Its function is as follows. Transports retinoic acid to the nucleus. Regulates the access of retinoic acid to the nuclear retinoic acid receptors. In Gallus gallus (Chicken), this protein is Cellular retinoic acid-binding protein 2 (CRABP2).